The chain runs to 289 residues: Tachykinins (289 aa).

The N-terminal stretch at 1–24 (MRPLSGLIALALLLLLLLTAPSSA) is a signal peptide. A disordered region spans residues 24 to 94 (AADTETESSG…DEEADSSYAE (71 aa)). The propeptide occupies 25–47 (ADTETESSGSPLTPGAEEPRRVV). Arg-59 carries the arginine amide modification. Residues 60–69 (GKKDEEHDTS) are compositionally biased toward basic and acidic residues. At Asn-95 the chain carries Asparagine amide. The residue at position 110 (Arg-110) is an Arginine amide. The residue at position 153 (Val-153) is a Valine amide. Residues Arg-165, Arg-200, Arg-239, and Arg-281 each carry the arginine amide modification. The propeptide occupies 285-289 (PALFE).

The protein belongs to the tachykinin family. In terms of tissue distribution, strong expression is seen in a group of 14 cells plus one isolated cell in the midgut of stage 17 embryos. Also expressed in a pair of medially located unidentified cells, just posterior to the brain, and in two lateral groups of cells that may be associated with tracheae. Expression in the larval gut is restricted to cells with endocrine cell-like morphology in the posterior midgut, just anterior to the malphigian tubules. In the brain, expression is detected in a restricted number of neuronal cell bodies. Expression in the adult female gut is restricted to the midgut with no expression detected in the hindgut.

The protein localises to the secreted. In terms of biological role, tachykinins are active peptides which excite neurons, evoke behavioral responses, are potent vasodilators and secretagogues, and contract (directly or indirectly) many smooth muscles. Stimulates gut muscle contractions. Required for the response to the male sex pheromone CH503 which is transferred from males to females during mating and inhibits courtship behavior by other males. The Gr68a gustatory receptor is required for detection of the pheromone and Gr68a-expressing neurons in the male foreleg relay signals to the suboesophageal zone (SEZ) which leads to courtship suppression through release of tachykinin from a cluster of 8-10 neurons in the SEZ. The polypeptide is Tachykinins (Drosophila melanogaster (Fruit fly)).